We begin with the raw amino-acid sequence, 560 residues long: Dihydroxy-acid dehydratase (560 aa).

Mg(2+) is bound at residue D80. C121 contacts [2Fe-2S] cluster. Residues D122 and K123 each coordinate Mg(2+). The residue at position 123 (K123) is an N6-carboxylysine. C194 is a [2Fe-2S] cluster binding site. E447 lines the Mg(2+) pocket. S473 serves as the catalytic Proton acceptor.

The protein belongs to the IlvD/Edd family. As to quaternary structure, homodimer. The cofactor is [2Fe-2S] cluster. Mg(2+) is required as a cofactor.

It carries out the reaction (2R)-2,3-dihydroxy-3-methylbutanoate = 3-methyl-2-oxobutanoate + H2O. It catalyses the reaction (2R,3R)-2,3-dihydroxy-3-methylpentanoate = (S)-3-methyl-2-oxopentanoate + H2O. It functions in the pathway amino-acid biosynthesis; L-isoleucine biosynthesis; L-isoleucine from 2-oxobutanoate: step 3/4. Its pathway is amino-acid biosynthesis; L-valine biosynthesis; L-valine from pyruvate: step 3/4. Functions in the biosynthesis of branched-chain amino acids. Catalyzes the dehydration of (2R,3R)-2,3-dihydroxy-3-methylpentanoate (2,3-dihydroxy-3-methylvalerate) into 2-oxo-3-methylpentanoate (2-oxo-3-methylvalerate) and of (2R)-2,3-dihydroxy-3-methylbutanoate (2,3-dihydroxyisovalerate) into 2-oxo-3-methylbutanoate (2-oxoisovalerate), the penultimate precursor to L-isoleucine and L-valine, respectively. This chain is Dihydroxy-acid dehydratase, found in Chloroherpeton thalassium (strain ATCC 35110 / GB-78).